Reading from the N-terminus, the 207-residue chain is Fibroblast growth factor 18 (207 aa).

Positions 1 to 27 are cleaved as a signal peptide; the sequence is MYSAPSACTCLCLHFLLLCFQVQVLVA. N39 carries an N-linked (GlcNAc...) asparagine glycan. C109 and C127 are oxidised to a cystine. An N-linked (GlcNAc...) asparagine glycan is attached at N137. The segment at 157–186 is disordered; sequence GRPRKGPKTRENQQDVHFMKRYPKGQPELQ. The segment covering 164–174 has biased composition (basic and acidic residues); the sequence is KTRENQQDVHF.

The protein belongs to the heparin-binding growth factors family. As to quaternary structure, interacts with FGFR3 and FGFR4.

The protein localises to the secreted. Plays an important role in the regulation of cell proliferation, cell differentiation and cell migration. Required for normal ossification and bone development. Stimulates hepatic and intestinal proliferation. In Homo sapiens (Human), this protein is Fibroblast growth factor 18 (FGF18).